Here is a 160-residue protein sequence, read N- to C-terminus: 3-hydroxyacyl-[acyl-carrier-protein] dehydratase FabZ (160 aa).

His-63 is an active-site residue.

The protein belongs to the thioester dehydratase family. FabZ subfamily.

The protein localises to the cytoplasm. It carries out the reaction a (3R)-hydroxyacyl-[ACP] = a (2E)-enoyl-[ACP] + H2O. In terms of biological role, involved in unsaturated fatty acids biosynthesis. Catalyzes the dehydration of short chain beta-hydroxyacyl-ACPs and long chain saturated and unsaturated beta-hydroxyacyl-ACPs. The sequence is that of 3-hydroxyacyl-[acyl-carrier-protein] dehydratase FabZ from Xylella fastidiosa (strain M12).